The following is a 1602-amino-acid chain: MAP kinase-activating death domain protein (1602 aa).

Positions 13–267 (YLVIVGARHP…VPVSGQKRVD (255 aa)) constitute a uDENN domain. Residues 105 to 121 (PKEKAEGGAGPRGKEGA) are compositionally biased toward basic and acidic residues. The disordered stretch occupies residues 105-167 (PKEKAEGGAG…GKRRAKAGNR (63 aa)). Residues 126-137 (ASEEAATESSES) are compositionally biased toward low complexity. The segment covering 138-156 (GSTLQPPSADSTPDVNQSP) has biased composition (polar residues). S155 is modified (phosphoserine). Basic residues predominate over residues 157–166 (RGKRRAKAGN). Residues 288-428 (RFTLVDFPLH…ESLELKKHLK (141 aa)) form the cDENN domain. Residues 430 to 564 (ALASMSLNTQ…LNPSNYAFQR (135 aa)) form the dDENN domain. Disordered stretches follow at residues 603 to 635 (ALSVPPERDSESDPTDDSGSDSMDYDDSSSSYS) and 676 to 840 (QPQK…NSTE). Positions 614 to 629 (SDPTDDSGSDSMDYDD) are enriched in acidic residues. Residues S688 and S691 each carry the phosphoserine modification. Polar residues predominate over residues 688-698 (SENSQENLPLR). Low complexity predominate over residues 699–711 (SSSSTTASSSPST). Position 778 is a phosphoserine (S778). A compositionally biased stretch (polar residues) spans 789 to 803 (ESYTPRFSQHASGSR). S812, S817, and S819 each carry phosphoserine. The segment covering 826-839 (RASSPNSTVSNNST) has biased composition (low complexity). Phosphoserine is present on residues S857, S861, S895, S900, and S909. Disordered stretches follow at residues 870-920 (KGAR…SSEN), 1030-1089 (KEPD…DTRS), and 1113-1231 (TEEK…RSSE). Residues 911 to 920 (QGRSSNSSEN) are compositionally biased toward polar residues. S1038 bears the Phosphoserine mark. Residues T1040 and T1045 each carry the phosphothreonine modification. At S1089 the chain carries Phosphoserine. A compositionally biased stretch (polar residues) spans 1119-1134 (QISADSGVSLASASQR). Over residues 1151 to 1162 (SSSQDSEVSNSS) the composition is skewed to low complexity. Over residues 1191–1209 (SRATLSDSEIETNSATSTI) the composition is skewed to polar residues. T1194 bears the Phosphothreonine mark. Residues S1196 and S1225 each carry the phosphoserine modification. The region spanning 1295 to 1370 (GMDQGPQEMI…GLVYSQQINE (76 aa)) is the Death domain.

Belongs to the MADD family. Interacts (via death domain) with TNFRSF1A (via death domain). Interacts with PIDD1. Interacts with YWHAZ. Interacts (via death domain) with KIF1B; links the motor KIF1B to Rab3-carrying vesicles in anterograde synaptic vesicle transport. Interacts with KIF1A. Interacts (via uDENN domain) with RAB3A, RAB3B, RAB3C and RAB3D; the GTP-bound form of the Rab proteins is preferred for interaction. In terms of tissue distribution, expressed in all tissues examined with the highest expression in brain.

It localises to the cell membrane. The protein resides in the cytoplasm. The protein localises to the cell projection. It is found in the axon. Guanyl-nucleotide exchange factor that regulates small GTPases of the Rab family. Converts GDP-bound inactive form of RAB27A and RAB27B to the GTP-bound active forms. Converts GDP-bound inactive form of RAB3A, RAB3C and RAB3D to the GTP-bound active forms, GTPases involved in synaptic vesicle exocytosis and vesicle secretion. Plays a role in synaptic vesicle formation and in vesicle trafficking at the neuromuscular junction. Involved in up-regulating a post-docking step of synaptic exocytosis in central synapses. Probably by binding to the motor proteins KIF1B and KIF1A, mediates motor-dependent transport of GTP-RAB3A-positive vesicles to the presynaptic nerve terminals. Plays a role in TNFA-mediated activation of the MAPK pathway, including ERK1/2. May link TNFRSF1A with MAP kinase activation. May be involved in the regulation of TNFA-induced apoptosis. This is MAP kinase-activating death domain protein from Rattus norvegicus (Rat).